Consider the following 375-residue polypeptide: Dual-specificity RNA methyltransferase RlmN (375 aa).

Glu-98 functions as the Proton acceptor in the catalytic mechanism. In terms of domain architecture, Radical SAM core spans 106-346 (GGKRRTLCVS…VRTTRGDDID (241 aa)). Cys-113 and Cys-349 are oxidised to a cystine. [4Fe-4S] cluster is bound by residues Cys-120, Cys-124, and Cys-127. S-adenosyl-L-methionine contacts are provided by residues 174-175 (GE), Ser-206, 228-230 (SLH), and Asn-306. The active-site S-methylcysteine intermediate is Cys-349.

This sequence belongs to the radical SAM superfamily. RlmN family. The cofactor is [4Fe-4S] cluster.

It localises to the cytoplasm. It carries out the reaction adenosine(2503) in 23S rRNA + 2 reduced [2Fe-2S]-[ferredoxin] + 2 S-adenosyl-L-methionine = 2-methyladenosine(2503) in 23S rRNA + 5'-deoxyadenosine + L-methionine + 2 oxidized [2Fe-2S]-[ferredoxin] + S-adenosyl-L-homocysteine. It catalyses the reaction adenosine(37) in tRNA + 2 reduced [2Fe-2S]-[ferredoxin] + 2 S-adenosyl-L-methionine = 2-methyladenosine(37) in tRNA + 5'-deoxyadenosine + L-methionine + 2 oxidized [2Fe-2S]-[ferredoxin] + S-adenosyl-L-homocysteine. Functionally, specifically methylates position 2 of adenine 2503 in 23S rRNA and position 2 of adenine 37 in tRNAs. m2A2503 modification seems to play a crucial role in the proofreading step occurring at the peptidyl transferase center and thus would serve to optimize ribosomal fidelity. The sequence is that of Dual-specificity RNA methyltransferase RlmN from Chromohalobacter salexigens (strain ATCC BAA-138 / DSM 3043 / CIP 106854 / NCIMB 13768 / 1H11).